A 420-amino-acid chain; its full sequence is Serine hydroxymethyltransferase (420 aa).

(6S)-5,6,7,8-tetrahydrofolate is bound by residues Leu-121 and 125-127 (GHL). Lys-230 bears the N6-(pyridoxal phosphate)lysine mark. (6S)-5,6,7,8-tetrahydrofolate is bound by residues Glu-246 and 354 to 356 (SPF).

It belongs to the SHMT family. In terms of assembly, homodimer. Pyridoxal 5'-phosphate serves as cofactor.

It localises to the cytoplasm. The catalysed reaction is (6R)-5,10-methylene-5,6,7,8-tetrahydrofolate + glycine + H2O = (6S)-5,6,7,8-tetrahydrofolate + L-serine. The protein operates within one-carbon metabolism; tetrahydrofolate interconversion. It functions in the pathway amino-acid biosynthesis; glycine biosynthesis; glycine from L-serine: step 1/1. Catalyzes the reversible interconversion of serine and glycine with tetrahydrofolate (THF) serving as the one-carbon carrier. This reaction serves as the major source of one-carbon groups required for the biosynthesis of purines, thymidylate, methionine, and other important biomolecules. Also exhibits THF-independent aldolase activity toward beta-hydroxyamino acids, producing glycine and aldehydes, via a retro-aldol mechanism. The protein is Serine hydroxymethyltransferase of Rickettsia canadensis (strain McKiel).